The sequence spans 250 residues: Ubiquinone/menaquinone biosynthesis C-methyltransferase UbiE (250 aa).

S-adenosyl-L-methionine contacts are provided by residues threonine 73, aspartate 94, 122 to 123, and serine 139; that span reads NA.

Belongs to the class I-like SAM-binding methyltransferase superfamily. MenG/UbiE family.

The enzyme catalyses a 2-demethylmenaquinol + S-adenosyl-L-methionine = a menaquinol + S-adenosyl-L-homocysteine + H(+). It carries out the reaction a 2-methoxy-6-(all-trans-polyprenyl)benzene-1,4-diol + S-adenosyl-L-methionine = a 5-methoxy-2-methyl-3-(all-trans-polyprenyl)benzene-1,4-diol + S-adenosyl-L-homocysteine + H(+). The protein operates within quinol/quinone metabolism; menaquinone biosynthesis; menaquinol from 1,4-dihydroxy-2-naphthoate: step 2/2. It functions in the pathway cofactor biosynthesis; ubiquinone biosynthesis. In terms of biological role, methyltransferase required for the conversion of demethylmenaquinol (DMKH2) to menaquinol (MKH2) and the conversion of 2-polyprenyl-6-methoxy-1,4-benzoquinol (DDMQH2) to 2-polyprenyl-3-methyl-6-methoxy-1,4-benzoquinol (DMQH2). The sequence is that of Ubiquinone/menaquinone biosynthesis C-methyltransferase UbiE from Francisella philomiragia subsp. philomiragia (strain ATCC 25017 / CCUG 19701 / FSC 153 / O#319-036).